Reading from the N-terminus, the 505-residue chain is uncharacterized protein (505 aa).

Positions 193–440 constitute a Radical SAM core domain; that stretch reads CTNKKCNLCE…LEIKKKYIGR (248 aa). Cysteine 208, cysteine 216, and cysteine 219 together coordinate [4Fe-4S] cluster. Residues 435 to 499 form the TRAM domain; that stretch reads KKYIGRVLEV…EKYLEGRILK (65 aa).

It depends on [4Fe-4S] cluster as a cofactor.

This is an uncharacterized protein from Methanocaldococcus jannaschii (strain ATCC 43067 / DSM 2661 / JAL-1 / JCM 10045 / NBRC 100440) (Methanococcus jannaschii).